The sequence spans 744 residues: Phosphoribosylformylglycinamidine synthase subunit PurL (744 aa).

The active site involves H45. Residues Y48 and K87 each contribute to the ATP site. Position 89 (E89) interacts with Mg(2+). Substrate is bound by residues 90-93 and R112; that span reads SHNH. H91 functions as the Proton acceptor in the catalytic mechanism. D113 contacts Mg(2+). Residue Q236 participates in substrate binding. D264 is a Mg(2+) binding site. 308–310 lines the substrate pocket; sequence ESQ. ATP-binding residues include N492 and G529. N530 contributes to the Mg(2+) binding site. S532 contacts substrate.

Belongs to the FGAMS family. Monomer. Part of the FGAM synthase complex composed of 1 PurL, 1 PurQ and 2 PurS subunits.

It is found in the cytoplasm. The catalysed reaction is N(2)-formyl-N(1)-(5-phospho-beta-D-ribosyl)glycinamide + L-glutamine + ATP + H2O = 2-formamido-N(1)-(5-O-phospho-beta-D-ribosyl)acetamidine + L-glutamate + ADP + phosphate + H(+). It participates in purine metabolism; IMP biosynthesis via de novo pathway; 5-amino-1-(5-phospho-D-ribosyl)imidazole from N(2)-formyl-N(1)-(5-phospho-D-ribosyl)glycinamide: step 1/2. Its function is as follows. Part of the phosphoribosylformylglycinamidine synthase complex involved in the purines biosynthetic pathway. Catalyzes the ATP-dependent conversion of formylglycinamide ribonucleotide (FGAR) and glutamine to yield formylglycinamidine ribonucleotide (FGAM) and glutamate. The FGAM synthase complex is composed of three subunits. PurQ produces an ammonia molecule by converting glutamine to glutamate. PurL transfers the ammonia molecule to FGAR to form FGAM in an ATP-dependent manner. PurS interacts with PurQ and PurL and is thought to assist in the transfer of the ammonia molecule from PurQ to PurL. In Erythrobacter litoralis (strain HTCC2594), this protein is Phosphoribosylformylglycinamidine synthase subunit PurL.